The sequence spans 213 residues: 3-isopropylmalate dehydratase small subunit (213 aa).

Belongs to the LeuD family. LeuD type 1 subfamily. As to quaternary structure, heterodimer of LeuC and LeuD.

The catalysed reaction is (2R,3S)-3-isopropylmalate = (2S)-2-isopropylmalate. It functions in the pathway amino-acid biosynthesis; L-leucine biosynthesis; L-leucine from 3-methyl-2-oxobutanoate: step 2/4. Its function is as follows. Catalyzes the isomerization between 2-isopropylmalate and 3-isopropylmalate, via the formation of 2-isopropylmaleate. In Pseudomonas syringae pv. tomato (strain ATCC BAA-871 / DC3000), this protein is 3-isopropylmalate dehydratase small subunit.